Here is a 105-residue protein sequence, read N- to C-terminus: Anti-sigma factor RsrA (105 aa).

Residues cysteine 11, histidine 37, cysteine 41, and cysteine 44 each contribute to the Zn(2+) site. Cysteines 11 and 44 form a disulfide. The tract at residues 33–47 (KFEHHFEECSPCLEK) is contributes to redox-sensitivity. Residues 86–105 (QSVPEHDVAAAPSSSAPQES) form a disordered region. Residues 94–105 (AAAPSSSAPQES) are compositionally biased toward low complexity.

It belongs to the zinc-associated anti-sigma factor (ZAS) superfamily. In terms of assembly, interacts with cognate sigma factor SigR under reducing but not oxiding conditions. Treatment with the thiol-oxidzing agent diamide inhibits the interaction, while incubation with thioredoxin (trxA) stimulates the interaction. The cofactor is Zn(2+). Post-translationally, under oxidizing conditions up to 3 disulfide bonds are formed. A single disulfide bond inhibits binding to SigR. Cys-11 forms a disulfide bond with either Cys-44 (the major bind) or Cys-41 (a minor bond).

Its function is as follows. A redox-regulated anti-sigma factor for extracytoplasmic function (ECF) sigma factor SigR, and a key sensor of disulfide stress. Holds SigR, its cognate ECF sigma factor, in an inactive form, inhibiting its sigma activity under reducing but not oxidizing conditions; oxidation and reduction of the anti-sigma factor is reversible. Mycothiol (MSH) is competent for reduction of RsrA, allowing it to bind to SigR. In conjunction with its cognate sigma factor SigR may sense the intracellular level of reduced MSH. Probably releases SigR during oxidative stress. The chain is Anti-sigma factor RsrA (rsrA) from Streptomyces coelicolor (strain ATCC BAA-471 / A3(2) / M145).